The chain runs to 383 residues: F-box/kelch-repeat protein At1g16250 (383 aa).

In terms of domain architecture, F-box spans serine 7–arginine 54. Kelch repeat units follow at residues cysteine 50–cysteine 103, cysteine 109–glycine 165, lysine 166–glycine 214, phenylalanine 216–asparagine 263, and glutamate 318–leucine 377.

This Arabidopsis thaliana (Mouse-ear cress) protein is F-box/kelch-repeat protein At1g16250.